The following is a 570-amino-acid chain: Proline--tRNA ligase (570 aa).

The protein belongs to the class-II aminoacyl-tRNA synthetase family. ProS type 1 subfamily. In terms of assembly, homodimer.

Its subcellular location is the cytoplasm. The catalysed reaction is tRNA(Pro) + L-proline + ATP = L-prolyl-tRNA(Pro) + AMP + diphosphate. Its function is as follows. Catalyzes the attachment of proline to tRNA(Pro) in a two-step reaction: proline is first activated by ATP to form Pro-AMP and then transferred to the acceptor end of tRNA(Pro). As ProRS can inadvertently accommodate and process non-cognate amino acids such as alanine and cysteine, to avoid such errors it has two additional distinct editing activities against alanine. One activity is designated as 'pretransfer' editing and involves the tRNA(Pro)-independent hydrolysis of activated Ala-AMP. The other activity is designated 'posttransfer' editing and involves deacylation of mischarged Ala-tRNA(Pro). The misacylated Cys-tRNA(Pro) is not edited by ProRS. The protein is Proline--tRNA ligase of Clostridium perfringens (strain SM101 / Type A).